A 213-amino-acid polypeptide reads, in one-letter code: Large ribosomal subunit protein uL23 (213 aa).

A large ribosomal subunit protein uL23 region spans residues 1 to 117 (MNHNEIIKYP…KSTSELKLEE (117 aa)). The unknown stretch occupies residues 118-213 (KIAAKIAAKE…TTKKTTTKKV (96 aa)).

It belongs to the universal ribosomal protein uL23 family. In terms of assembly, part of the 50S ribosomal subunit. Contacts protein L29, and trigger factor when it is bound to the ribosome.

One of the early assembly proteins it binds 23S rRNA. One of the proteins that surrounds the polypeptide exit tunnel on the outside of the ribosome. Forms the main docking site for trigger factor binding to the ribosome. The chain is Large ribosomal subunit protein uL23 from Mycoplasma mobile (strain ATCC 43663 / 163K / NCTC 11711) (Mesomycoplasma mobile).